Here is a 265-residue protein sequence, read N- to C-terminus: Ribosomal RNA small subunit methyltransferase A (265 aa).

Asparagine 13, leucine 15, glycine 40, glutamate 61, aspartate 85, and asparagine 103 together coordinate S-adenosyl-L-methionine.

It belongs to the class I-like SAM-binding methyltransferase superfamily. rRNA adenine N(6)-methyltransferase family. RsmA subfamily.

The protein resides in the cytoplasm. The catalysed reaction is adenosine(1518)/adenosine(1519) in 16S rRNA + 4 S-adenosyl-L-methionine = N(6)-dimethyladenosine(1518)/N(6)-dimethyladenosine(1519) in 16S rRNA + 4 S-adenosyl-L-homocysteine + 4 H(+). Specifically dimethylates two adjacent adenosines (A1518 and A1519) in the loop of a conserved hairpin near the 3'-end of 16S rRNA in the 30S particle. May play a critical role in biogenesis of 30S subunits. This Aromatoleum aromaticum (strain DSM 19018 / LMG 30748 / EbN1) (Azoarcus sp. (strain EbN1)) protein is Ribosomal RNA small subunit methyltransferase A.